We begin with the raw amino-acid sequence, 630 residues long: Plastin-3 (630 aa).

2 EF-hand domains span residues 12-47 (DELDELKEAFAKVDLNSNGFICDYELHELFKEANMP) and 52-87 (KVREIIQKLMLDGDRNKDGKISFDEFVYIFQEVKSS). Positions 25, 27, 29, 36, 65, 67, 69, 71, and 76 each coordinate Ca(2+). Actin-binding regions lie at residues 109 to 382 (TSEL…ALTK) and 383 to 627 (PENQ…GRGM). 2 Calponin-homology (CH) domains span residues 123–239 (EEEK…KIGL) and 267–378 (LSPE…NKYP). Phosphoserine occurs at positions 268, 293, 326, and 339. Thr391 carries the phosphothreonine modification. 2 Calponin-homology (CH) domains span residues 397-506 (TREE…RRYT) and 518-627 (KAND…GRGM).

Monomer. Expressed in a variety of organs, including muscle, brain, uterus and esophagus.

The protein resides in the cytoplasm. In terms of biological role, actin-bundling protein. The chain is Plastin-3 (PLS3) from Homo sapiens (Human).